A 193-amino-acid polypeptide reads, in one-letter code: Probable GTP-binding protein EngB (193 aa).

One can recognise an EngB-type G domain in the interval 22–193 (ALPEFALAGR…EAWAALERFL (172 aa)). GTP is bound by residues 30 to 37 (GRSNVGKS), 57 to 61 (GKTQT), 75 to 78 (DVPG), 142 to 145 (TKAD), and 174 to 176 (FSA). Mg(2+) contacts are provided by S37 and T59.

Belongs to the TRAFAC class TrmE-Era-EngA-EngB-Septin-like GTPase superfamily. EngB GTPase family. Mg(2+) serves as cofactor.

Necessary for normal cell division and for the maintenance of normal septation. In Geobacillus sp. (strain WCH70), this protein is Probable GTP-binding protein EngB.